The following is a 438-amino-acid chain: Trigger factor (438 aa).

Positions 163–248 (GDTAIIDFAG…VKEIKRKEIA (86 aa)) constitute a PPIase FKBP-type domain.

Belongs to the FKBP-type PPIase family. Tig subfamily.

The protein localises to the cytoplasm. The catalysed reaction is [protein]-peptidylproline (omega=180) = [protein]-peptidylproline (omega=0). Functionally, involved in protein export. Acts as a chaperone by maintaining the newly synthesized protein in an open conformation. Functions as a peptidyl-prolyl cis-trans isomerase. The protein is Trigger factor of Pelotomaculum thermopropionicum (strain DSM 13744 / JCM 10971 / SI).